A 205-amino-acid polypeptide reads, in one-letter code: Translation initiation factor 2 subunit beta (205 aa).

Residues 145-203 (GIEIGKEYTVTIESTGSAGEGIARYQGYTIYVPKAKKGERVKIIIRKIKRNVAIAELAD) form the TRAM domain.

The protein belongs to the eIF-2-beta/eIF-5 family. Heterotrimer composed of an alpha, a beta and a gamma chain.

EIF-2 functions in the early steps of protein synthesis by forming a ternary complex with GTP and initiator tRNA. This Picrophilus torridus (strain ATCC 700027 / DSM 9790 / JCM 10055 / NBRC 100828 / KAW 2/3) protein is Translation initiation factor 2 subunit beta.